Consider the following 476-residue polypeptide: Mitochondrial-processing peptidase subunit beta (476 aa).

The transit peptide at 1 to 28 (MASRRLALNLAQGVKARAGGVINPFRRG) directs the protein to the mitochondrion. A Zn(2+)-binding site is contributed by histidine 84. Glutamate 87 (proton acceptor) is an active-site residue. 2 residues coordinate Zn(2+): histidine 88 and glutamate 164.

Belongs to the peptidase M16 family. In terms of assembly, heterodimer of mpp (alpha) and pep (beta) subunits, forming the mitochondrial processing protease (MPP) in which mpp is involved in substrate recognition and binding and pep is the catalytic subunit. Component of the ubiquinol-cytochrome c oxidoreductase (cytochrome b-c1 complex, complex III, CIII), a multisubunit enzyme composed of 10 subunits. The complex is composed of 3 respiratory subunits cytochrome b (cob), cytochrome c1 (cyt-1) and Rieske protein (fes-1), 2 core protein subunits pep and ucr-1, and 5 low-molecular weight protein subunits qcr6, qcr7, qcr8, qcr9 and probably NCU16844/qcr10. The complex exists as an obligatory dimer and forms supercomplexes (SCs) in the inner mitochondrial membrane with NADH-ubiquinone oxidoreductase (complex I, CI) and cytochrome c oxidase (complex IV, CIV), resulting in different assemblies (supercomplexes SCI(1)III(2), SCIII(2)IV(1) and SCIII(2)IV(2) as well as higher order I(x)III(y)IV(z) megacomplexes). It depends on Zn(2+) as a cofactor.

The protein resides in the mitochondrion matrix. Its subcellular location is the mitochondrion inner membrane. The enzyme catalyses Release of N-terminal transit peptides from precursor proteins imported into the mitochondrion, typically with Arg in position P2.. Binding to mpp is required for catalytic activity. Inhibited by metal chelator ethylenediaminetetraacetic acid (EDTA). Catalytic subunit of the essential mitochondrial processing protease (MPP), which cleaves the mitochondrial sequence off newly imported precursors proteins. Preferentially, cleaves after an arginine at position P2. Its function is as follows. Component of the ubiquinol-cytochrome c oxidoreductase, a multisubunit transmembrane complex that is part of the mitochondrial electron transport chain which drives oxidative phosphorylation. The respiratory chain contains 3 multisubunit complexes succinate dehydrogenase (complex II, CII), ubiquinol-cytochrome c oxidoreductase (cytochrome b-c1 complex, complex III, CIII) and cytochrome c oxidase (complex IV, CIV), that cooperate to transfer electrons derived from NADH and succinate to molecular oxygen, creating an electrochemical gradient over the inner membrane that drives transmembrane transport and the ATP synthase. The cytochrome b-c1 complex catalyzes electron transfer from ubiquinol to cytochrome c, linking this redox reaction to translocation of protons across the mitochondrial inner membrane, with protons being carried across the membrane as hydrogens on the quinol. In the process called Q cycle, 2 protons are consumed from the matrix, 4 protons are released into the intermembrane space and 2 electrons are passed to cytochrome c. The sequence is that of Mitochondrial-processing peptidase subunit beta from Neurospora crassa (strain ATCC 24698 / 74-OR23-1A / CBS 708.71 / DSM 1257 / FGSC 987).